Consider the following 242-residue polypeptide: Biosynthetic peptidoglycan transglycosylase (242 aa).

A helical transmembrane segment spans residues 12–32 (LLLWLIALSVLLVLLLRWVPP).

Belongs to the glycosyltransferase 51 family.

Its subcellular location is the cell inner membrane. It carries out the reaction [GlcNAc-(1-&gt;4)-Mur2Ac(oyl-L-Ala-gamma-D-Glu-L-Lys-D-Ala-D-Ala)](n)-di-trans,octa-cis-undecaprenyl diphosphate + beta-D-GlcNAc-(1-&gt;4)-Mur2Ac(oyl-L-Ala-gamma-D-Glu-L-Lys-D-Ala-D-Ala)-di-trans,octa-cis-undecaprenyl diphosphate = [GlcNAc-(1-&gt;4)-Mur2Ac(oyl-L-Ala-gamma-D-Glu-L-Lys-D-Ala-D-Ala)](n+1)-di-trans,octa-cis-undecaprenyl diphosphate + di-trans,octa-cis-undecaprenyl diphosphate + H(+). The protein operates within cell wall biogenesis; peptidoglycan biosynthesis. Functionally, peptidoglycan polymerase that catalyzes glycan chain elongation from lipid-linked precursors. This is Biosynthetic peptidoglycan transglycosylase from Stutzerimonas stutzeri (strain A1501) (Pseudomonas stutzeri).